We begin with the raw amino-acid sequence, 360 residues long: Protein Wnt-2 (360 aa).

Positions 1–25 are cleaved as a signal peptide; that stretch reads MNVPLGGIWLWLPLLLTWLTPEVSS. Cystine bridges form between cysteine 76–cysteine 87, cysteine 127–cysteine 135, cysteine 137–cysteine 157, cysteine 206–cysteine 220, cysteine 208–cysteine 215, cysteine 278–cysteine 309, cysteine 294–cysteine 304, cysteine 308–cysteine 348, cysteine 324–cysteine 339, cysteine 326–cysteine 336, and cysteine 331–cysteine 332. The O-palmitoleoyl serine; by PORCN moiety is linked to residue serine 212. A glycan (N-linked (GlcNAc...) asparagine) is linked at asparagine 295.

The protein belongs to the Wnt family. Post-translationally, palmitoleoylation is required for efficient binding to frizzled receptors. Depalmitoleoylation leads to Wnt signaling pathway inhibition. In terms of tissue distribution, in embryos in the developing allantois, pericardium heart, and ventral-lateral mesoderm; in adults in lung, brain, heart and placenta.

It localises to the secreted. It is found in the extracellular space. The protein resides in the extracellular matrix. Functionally, ligand for members of the frizzled family of seven transmembrane receptors. Functions in the canonical Wnt/beta-catenin signaling pathway. Functions as a upstream regulator of FGF10 expression. Plays an important role in embryonic lung development. May contribute to embryonic brain development by regulating the proliferation of dopaminergic precursors and neurons. This chain is Protein Wnt-2 (Wnt2), found in Mus musculus (Mouse).